Reading from the N-terminus, the 233-residue chain is Type IV secretion system protein PtlE homolog (233 aa).

A helical membrane pass occupies residues 42–62 (VAWAALAVTALSLIAIATMLP).

The protein belongs to the virB8 family.

The protein localises to the cell inner membrane. The chain is Type IV secretion system protein PtlE homolog (ptlE) from Bordetella parapertussis (strain 12822 / ATCC BAA-587 / NCTC 13253).